A 1593-amino-acid chain; its full sequence is Autotransporter CRAC (1593 aa).

Positions 1–54 (MNKVYNTVWNESTGMWVVTSELTRKGGRRPRQIRRTALAGLIAGLLLPSAPALA) are cleaved as a signal peptide. Over residues 65-85 (GATSSSMSLNAGDTATDTTIN) the composition is skewed to polar residues. Disordered regions lie at residues 65 to 100 (GATS…SATS) and 1267 to 1286 (KADS…PVPP). Low complexity predominate over residues 86-97 (SGGSQRVSSGGS). Over residues 1269 to 1280 (DSSQPGTDNPGT) the composition is skewed to polar residues. One can recognise an Autotransporter domain in the interval 1325-1593 (NTRSPGGVWG…TGSVGFRINF (269 aa)).

In terms of processing, glycosylated by heptosyltransferas BAHTCr. Glycosylation is required for adhesion to mammalian cells and colonization of the mouse host gastrointestinal tract.

The protein resides in the cell outer membrane. Functionally, autotransporter required for the colonization of the mouse host gastrointestinal tract, possibly by mediating bacteria adhesion to host cells. The protein is Autotransporter CRAC of Citrobacter rodentium (strain ICC168) (Citrobacter freundii biotype 4280).